A 268-amino-acid chain; its full sequence is Hydroxyethylthiazole kinase (268 aa).

Residue methionine 45 coordinates substrate. 2 residues coordinate ATP: arginine 121 and threonine 167. Residue glycine 194 participates in substrate binding.

It belongs to the Thz kinase family. Requires Mg(2+) as cofactor.

It carries out the reaction 5-(2-hydroxyethyl)-4-methylthiazole + ATP = 4-methyl-5-(2-phosphooxyethyl)-thiazole + ADP + H(+). Its pathway is cofactor biosynthesis; thiamine diphosphate biosynthesis; 4-methyl-5-(2-phosphoethyl)-thiazole from 5-(2-hydroxyethyl)-4-methylthiazole: step 1/1. Functionally, catalyzes the phosphorylation of the hydroxyl group of 4-methyl-5-beta-hydroxyethylthiazole (THZ). The sequence is that of Hydroxyethylthiazole kinase from Bacillus cereus (strain ATCC 10987 / NRS 248).